A 246-amino-acid chain; its full sequence is UDP-2,3-diacylglucosamine hydrolase (246 aa).

Residues D8, H10, D41, N79, and H114 each contribute to the Mn(2+) site. A substrate-binding site is contributed by N79–R80. D122, K164, K167, and H195 together coordinate substrate. Residues H195 and H197 each contribute to the Mn(2+) site.

Belongs to the LpxH family. Mn(2+) is required as a cofactor.

The protein localises to the cell inner membrane. It carries out the reaction UDP-2-N,3-O-bis[(3R)-3-hydroxytetradecanoyl]-alpha-D-glucosamine + H2O = 2-N,3-O-bis[(3R)-3-hydroxytetradecanoyl]-alpha-D-glucosaminyl 1-phosphate + UMP + 2 H(+). Its pathway is glycolipid biosynthesis; lipid IV(A) biosynthesis; lipid IV(A) from (3R)-3-hydroxytetradecanoyl-[acyl-carrier-protein] and UDP-N-acetyl-alpha-D-glucosamine: step 4/6. Functionally, hydrolyzes the pyrophosphate bond of UDP-2,3-diacylglucosamine to yield 2,3-diacylglucosamine 1-phosphate (lipid X) and UMP by catalyzing the attack of water at the alpha-P atom. Involved in the biosynthesis of lipid A, a phosphorylated glycolipid that anchors the lipopolysaccharide to the outer membrane of the cell. The polypeptide is UDP-2,3-diacylglucosamine hydrolase (Vibrio cholerae serotype O1 (strain ATCC 39541 / Classical Ogawa 395 / O395)).